We begin with the raw amino-acid sequence, 68 residues long: Large ribosomal subunit protein bL31 (68 aa).

It belongs to the bacterial ribosomal protein bL31 family. Type A subfamily. In terms of assembly, part of the 50S ribosomal subunit.

Functionally, binds the 23S rRNA. The protein is Large ribosomal subunit protein bL31 of Helicobacter hepaticus (strain ATCC 51449 / 3B1).